A 253-amino-acid chain; its full sequence is MVVETGVNKLVRLQGKIEGINSKIDEADLRRANAKSSIVEASSRLEKAEGEVASFQRRIRLVQQNLNDVTERAQMLQSKVDNLEDVSESVKQARNQYEEEEAESDEKIQNLEEEVKVKKRELEENEIKLREKERRNVVVHRDIEAATVKADAIEKRIEILENTIKNGLESIKDLEEREGRTNEKENNIAEQISFLDNKFKEVEIRIEAAERNCNVLEHNIKETSEEIKTWKHNTHAIEEEIAAMDDVGDDDTQ.

Residues 7-253 (VNKLVRLQGK…MDDVGDDDTQ (247 aa)) are a coiled coil.

Belongs to the tropomyosin family. As to quaternary structure, homodimer.

Its function is as follows. Tropomyosin, in association with the troponin complex, plays a central role in the calcium dependent regulation of muscle contraction. The chain is Tropomyosin-1 (TROP1) from Hydra vulgaris (Hydra).